A 350-amino-acid polypeptide reads, in one-letter code: Cytochrome c biogenesis protein CcsA (350 aa).

The next 8 membrane-spanning stretches (helical) occupy residues Asn23–Pro43, Leu47–Leu67, Leu82–His102, Trp108–Leu128, Val153–Ile173, Leu258–Asn278, Trp293–Trp313, and Ala319–Leu339.

This sequence belongs to the CcmF/CycK/Ccl1/NrfE/CcsA family. May interact with ccs1.

The protein localises to the cellular thylakoid membrane. In terms of biological role, required during biogenesis of c-type cytochromes (cytochrome c6 and cytochrome f) at the step of heme attachment. This chain is Cytochrome c biogenesis protein CcsA, found in Synechococcus sp. (strain JA-2-3B'a(2-13)) (Cyanobacteria bacterium Yellowstone B-Prime).